The sequence spans 591 residues: Max-binding protein MNT (591 aa).

N-acetylserine is present on Ser-2. Disordered stretches follow at residues 17-122 (AQQQ…APRQ) and 182-223 (PGVQ…GIGT). The segment covering 22 to 44 (RAREEQERLRLEREREREQEQKR) has biased composition (basic and acidic residues). Composition is skewed to pro residues over residues 63 to 84 (EAPP…PLAT) and 102 to 120 (SLPP…PLAP). The segment covering 205-216 (PAEEAKSSEQKK) has biased composition (basic and acidic residues). The region spanning 222-273 (GTREVHNKLEKNRRAHLKECFETLKRNIPNVDDKKTSNLSVLRTALRYIQSL) is the bHLH domain. The segment at 273–301 (LKRKEKEYEHEMERLAREKIATQQRLAEL) is leucine-zipper. The interval 321 to 426 (TGQPEDDQAS…PPPATPTQTL (106 aa)) is disordered. Residues 336-346 (EGEDNVDEEME) show a composition bias toward acidic residues. Residues 374–383 (STAPAPLPTH) show a composition bias toward pro residues. Low complexity predominate over residues 390–411 (PVALSPAHLPVQQQQPPQQKTP). Residues 412–421 (LPAPPPPPAT) show a composition bias toward pro residues.

In terms of assembly, efficient DNA binding requires dimerization with another bHLH protein. Binds DNA as a homodimer or a heterodimer with MAX.

The protein resides in the nucleus. In terms of biological role, binds DNA as a heterodimer with MAX and represses transcription. Binds to the canonical E box sequence 5'-CACGTG-3' and, with higher affinity, to 5'-CACGCG-3'. The chain is Max-binding protein MNT (Mnt) from Mus musculus (Mouse).